We begin with the raw amino-acid sequence, 127 residues long: Probable tautomerase YusQ (127 aa).

Proline 2 functions as the Proton acceptor; via imino nitrogen in the catalytic mechanism.

The protein belongs to the 4-oxalocrotonate tautomerase family.

The sequence is that of Probable tautomerase YusQ (yusQ) from Bacillus subtilis (strain 168).